The following is a 268-amino-acid chain: Microtubule-associated protein RP/EB family member 1 (268 aa).

A2 carries the post-translational modification N-acetylalanine. In terms of domain architecture, Calponin-homology (CH) spans 14 to 116 (NLSRHDMLAW…FVQWFKKFFD (103 aa)). Position 66 is an N6-crotonyllysine (K66). The residue at position 124 (Y124) is a Phosphotyrosine. Residues 124–268 (YDPVAARQGQ…GGPQEEQEEY (145 aa)) are interaction with MTUS2/TIP150. A compositionally biased stretch (low complexity) spans 146 to 160 (LNKPKKPLSSSSAAP). The disordered stretch occupies residues 146–191 (LNKPKKPLSSSSAAPQRPISTQRTAAAPKAGPGVVRKNPGVGNGDD). Phosphoserine occurs at positions 155 and 165. The EB1 C-terminal domain occupies 185–255 (GVGNGDDEAA…LYATDEGFVI (71 aa)). The tract at residues 185 to 268 (GVGNGDDEAA…GGPQEEQEEY (84 aa)) is interaction with CDK5RAP2. Residues 206–211 (TVEDLE) are interaction with APC. The interval 208-268 (EDLEKERDFY…GGPQEEQEEY (61 aa)) is DCTN1-binding. K220 carries the N6-acetyllysine modification. Positions 220 to 242 (KLRNIELICQENEGENDPVLQRI) are APC-binding. The segment at 232–255 (EGENDPVLQRIVDILYATDEGFVI) is interaction with SKA1.

Belongs to the MAPRE family. Homodimer. Heterodimer with MAPRE3. Interacts with DCTN1, DCTN2, TERF1 and dynein intermediate chain. Interaction with DIAPH1 and DIAPH2. Interacts (via C-terminal residues 206-211) with APC (via C-terminal residues 2674-2845); the interaction inhibits association with and bundling of F-actin. Interacts with CLASP2, DST, KIF2C and STIM1; probably required for their targeting to the growing microtubule plus ends. Interacts with MTUS2; interaction is direct and probably targets MTUS2 to microtubules. Interacts (via C-terminus) with SKA1 (via SXIP motif); the interaction is direct and stabilizes the kinetochore-microtubule attachment of the SKA1 complex. Interacts with APC2. Interacts with CLASP1. Interacts with CDK5RAP2. Interacts with MACF1. Interacts with RABL2/RABL2A; binds preferentially to GTP-bound RABL2. Interacts with KCNAB2. Interacts (via C-terminus) with CLIP1. Interacts with SLAIN2 and SLAIN1. Interacts with KIF18B; this interaction is required for efficient accumulation of KIF18B at microtubule plus ends. Interacts with MISP. Interacts with KNSTRN. Interacts with NCKAP5L. Interacts with CAMSAP2. Interacts with PDE4DIP isoform 13/MMG8/SMYLE; this interaction is required for its recruitment to the Golgi apparatus. Forms a pericentrosomal complex with AKAP9, CDK5RAP2 and PDE4DIP isoform 13/MMG8/SMYLE; within this complex, MAPRE1 binding to CDK5RAP2 may be mediated by PDE4DIP. Interacts with AKNA. Interacts with GAS2L1, GAS2L2, and GAS2L3. Interacts with RARRES1 and AGBL2. Acetylation at Lys-220 by KAT2B/PCAF promotes dynamic kinetochore-microtubule interactions in early mitosis. In terms of processing, crotonylated by KAT5 during mitosis, promoting astral microtubule plasticity and dynamic connection between astral microtubules and the cortex during mitotic chromosome segregation, thereby ensuring accurate spindle positioning in mitosis. Decrotonylated by HDAC3.

It localises to the cytoplasm. It is found in the cytoskeleton. Its subcellular location is the microtubule organizing center. The protein localises to the centrosome. The protein resides in the golgi apparatus. It localises to the spindle. It is found in the spindle pole. Its function is as follows. Plus-end tracking protein (+TIP) that binds to the plus-end of microtubules and regulates the dynamics of the microtubule cytoskeleton. Recruits other +TIP proteins to microtubules by binding to a conserved Ser-X-Leu-Pro (SXLP) motif in their polypeptide chains. Promotes cytoplasmic microtubule nucleation and elongation. Involved in mitotic spindle positioning by stabilizing microtubules and promoting dynamic connection between astral microtubules and the cortex during mitotic chromosome segregation. Assists chromosome alignment in metaphase by recruiting the SKA complex to the spindle and stabilizing its interactions with microtubule bundles (K-fibers). Also acts as a regulator of minus-end microtubule organization: interacts with the complex formed by AKAP9 and PDE4DIP, leading to recruit CAMSAP2 to the Golgi apparatus, thereby tethering non-centrosomal minus-end microtubules to the Golgi, an important step for polarized cell movement. Promotes elongation of CAMSAP2-decorated microtubule stretches on the minus-end of microtubules. Acts as a regulator of autophagosome transport via interaction with CAMSAP2. Functions downstream of Rho GTPases and DIAPH1 in stable microtubule formation. May play a role in cell migration. The sequence is that of Microtubule-associated protein RP/EB family member 1 (MAPRE1) from Pongo abelii (Sumatran orangutan).